The chain runs to 229 residues: 2-phytyl-1,4-naphtoquinone methyltransferase (229 aa).

It belongs to the class I-like SAM-binding methyltransferase superfamily. MenG/UbiE family.

It catalyses the reaction demethylphylloquinol + S-adenosyl-L-methionine = phylloquinol + S-adenosyl-L-homocysteine + H(+). Its pathway is cofactor biosynthesis; phylloquinone biosynthesis. In terms of biological role, methyltransferase required for the conversion of 2-phytyl-1,4-beta-naphthoquinol to phylloquinol. This Trichormus variabilis (strain ATCC 29413 / PCC 7937) (Anabaena variabilis) protein is 2-phytyl-1,4-naphtoquinone methyltransferase.